We begin with the raw amino-acid sequence, 216 residues long: uncharacterized protein (216 aa).

The chain crosses the membrane as a helical span at residues 5–25 (YVKALVAVTVALGVLLPSTIS). 2 stretches are compositionally biased toward low complexity: residues 28 to 67 (KSFS…SSSS) and 89 to 108 (KASS…ATSK). The disordered stretch occupies residues 28–115 (KSFSGRSSSS…TSKVTGKTYS (88 aa)). 2 helical membrane-spanning segments follow: residues 137–157 (GFAP…MFMI) and 183–203 (IAWI…IALI).

It localises to the cell membrane. This is an uncharacterized protein from Bacillus subtilis (strain 168).